Here is a 338-residue protein sequence, read N- to C-terminus: Phenylalanine--tRNA ligase alpha subunit (338 aa).

Glu252 contacts Mg(2+).

The protein belongs to the class-II aminoacyl-tRNA synthetase family. Phe-tRNA synthetase alpha subunit type 1 subfamily. As to quaternary structure, tetramer of two alpha and two beta subunits. Mg(2+) is required as a cofactor.

Its subcellular location is the cytoplasm. The enzyme catalyses tRNA(Phe) + L-phenylalanine + ATP = L-phenylalanyl-tRNA(Phe) + AMP + diphosphate + H(+). The protein is Phenylalanine--tRNA ligase alpha subunit of Pseudomonas paraeruginosa (strain DSM 24068 / PA7) (Pseudomonas aeruginosa (strain PA7)).